A 98-amino-acid chain; its full sequence is NADH-ubiquinone oxidoreductase chain 4L (98 aa).

A run of 3 helical transmembrane segments spans residues 1-21, 29-49, and 61-81; these read MPVV…GLLI, SLLC…VTVL, and IILL…LVMV.

The protein belongs to the complex I subunit 4L family. In terms of assembly, core subunit of respiratory chain NADH dehydrogenase (Complex I) which is composed of 45 different subunits.

The protein resides in the mitochondrion inner membrane. It carries out the reaction a ubiquinone + NADH + 5 H(+)(in) = a ubiquinol + NAD(+) + 4 H(+)(out). Its function is as follows. Core subunit of the mitochondrial membrane respiratory chain NADH dehydrogenase (Complex I) which catalyzes electron transfer from NADH through the respiratory chain, using ubiquinone as an electron acceptor. Part of the enzyme membrane arm which is embedded in the lipid bilayer and involved in proton translocation. This Helarctos malayanus (Malayan sun bear) protein is NADH-ubiquinone oxidoreductase chain 4L (MT-ND4L).